We begin with the raw amino-acid sequence, 520 residues long: Cyclic AMP-responsive element-binding protein 3-like protein 2 (520 aa).

Residues 1–378 lie on the Cytoplasmic side of the membrane; the sequence is MEVLESGEQG…CKLAGTQTGT (378 aa). S93 bears the Phosphoserine mark. A Glycyl lysine isopeptide (Lys-Gly) (interchain with G-Cter in SUMO2) cross-link involves residue K178. S191 carries the phosphoserine modification. A disordered region spans residues 195-264; that stretch reads APVDHLHLPP…PHKLQGSGPL (70 aa). Low complexity-rich tracts occupy residues 208-220 and 234-255; these read SSHG…SLSP and SPSR…LTAP. The bZIP domain maps to 294-357; sequence ALKKIRRKIK…RTLLQQLQKL (64 aa). The segment at 296-325 is basic motif; the sequence is KKIRRKIKNKISAQESRRKKKEYMDSLEKK. Positions 336–357 are leucine-zipper; sequence LRKKVEVLENTNRTLLQQLQKL. Residues 379-399 traverse the membrane as a helical; Signal-anchor for type II membrane protein segment; sequence CLMVVVLCFAVAFGSFFQGYG. The Lumenal portion of the chain corresponds to 400 to 520; the sequence is PYPSATKMAL…ELDRRVNTTF (121 aa). The short motif at 427–430 is the S1P recognition element; it reads RNLL. Residues N480, N504, and N517 are each glycosylated (N-linked (GlcNAc...) asparagine).

This sequence belongs to the bZIP family. ATF subfamily. As to quaternary structure, binds DNA as a dimer. Upon ER stress, translocated to the Golgi apparatus, where it is processed by regulated intramembrane proteolysis (RIP) to release the cytosol-facing N-terminal transcription factor domain. The cleavage is performed sequentially by site-1 and site-2 proteases (S1P/MBTPS1 and S2P/MBTPS2). In terms of processing, N-glycosylated. Post-translationally, ubiquitinated by HRD1/SYVN1; undergoes 'Lys-48'-linked ubiquitination, followed by rapid proteasomal degradation under normal conditions. Upon ER stress, SYVN1 E3 ubiquitin-protein ligase dissociates from its substrate, ubiquitination does not occur and CREB3L2 is stabilized.

It is found in the endoplasmic reticulum membrane. The protein localises to the nucleus. Transcription factor involved in unfolded protein response (UPR). In the absence of endoplasmic reticulum (ER) stress, inserted into ER membranes, with N-terminal DNA-binding and transcription activation domains oriented toward the cytosolic face of the membrane. In response to ER stress, transported to the Golgi, where it is cleaved in a site-specific manner by resident proteases S1P/MBTPS1 and S2P/MBTPS2. The released N-terminal cytosolic domain is translocated to the nucleus to effect transcription of specific target genes. Plays a critical role in chondrogenesis by activating the transcription of SEC23A, which promotes the transport and secretion of cartilage matrix proteins, and possibly that of ER biogenesis-related genes. In a neuroblastoma cell line, protects cells from ER stress-induced death. In vitro activates transcription of target genes via direct binding to the CRE site. The polypeptide is Cyclic AMP-responsive element-binding protein 3-like protein 2 (CREB3L2) (Pongo abelii (Sumatran orangutan)).